The following is a 258-amino-acid chain: 3-deoxy-manno-octulosonate cytidylyltransferase (258 aa).

The protein belongs to the KdsB family.

It is found in the cytoplasm. It catalyses the reaction 3-deoxy-alpha-D-manno-oct-2-ulosonate + CTP = CMP-3-deoxy-beta-D-manno-octulosonate + diphosphate. It functions in the pathway nucleotide-sugar biosynthesis; CMP-3-deoxy-D-manno-octulosonate biosynthesis; CMP-3-deoxy-D-manno-octulosonate from 3-deoxy-D-manno-octulosonate and CTP: step 1/1. It participates in bacterial outer membrane biogenesis; lipopolysaccharide biosynthesis. In terms of biological role, activates KDO (a required 8-carbon sugar) for incorporation into bacterial lipopolysaccharide in Gram-negative bacteria. The chain is 3-deoxy-manno-octulosonate cytidylyltransferase from Parvibaculum lavamentivorans (strain DS-1 / DSM 13023 / NCIMB 13966).